The primary structure comprises 108 residues: E3 ubiquitin-protein ligase Midline-1 (108 aa).

The B30.2/SPRY domain occupies 1 to 100 (KSAPKHEWIG…IITGLPIPDH (100 aa)).

This sequence belongs to the TRIM/RBCC family. As to quaternary structure, homodimer or heterodimer with MID2. Interacts with IGBP1.

The protein resides in the cytoplasm. It localises to the cytoskeleton. It carries out the reaction S-ubiquitinyl-[E2 ubiquitin-conjugating enzyme]-L-cysteine + [acceptor protein]-L-lysine = [E2 ubiquitin-conjugating enzyme]-L-cysteine + N(6)-ubiquitinyl-[acceptor protein]-L-lysine.. Has E3 ubiquitin ligase activity towards IGBP1, promoting its monoubiquitination, which results in deprotection of the catalytic subunit of protein phosphatase PP2A, and its subsequent degradation by polyubiquitination. In Mus caroli (Ryukyu mouse), this protein is E3 ubiquitin-protein ligase Midline-1 (Mid1).